Consider the following 82-residue polypeptide: Cortexin-1 (82 aa).

Residues 1–20 (MSAPWTLSPEPLPPSTGPPV) form a disordered region. A helical membrane pass occupies residues 30 to 50 (TVFAFVLCLLVVLVLLMVRCV).

It belongs to the cortexin family. As to expression, neuron specific.

The protein resides in the membrane. Its function is as follows. May mediate extracellular or intracellular signaling of cortical neurons during forebrain development. This chain is Cortexin-1 (Ctxn1), found in Rattus norvegicus (Rat).